The sequence spans 557 residues: MKKMSNIYESAANTLGIFNSPCLTKVELRVACKGISDRDALSKPDPCVILKMQSHGQWFEVDRTEVIRTCINPVYSKLFTVDFYFEEVQRLRFEVHDISSNHNGLKEADFLGGMECTLGQIVSQRKLSKSLLKHGNTAGKSSITVIAEELSGNDDYVELAFNARKLDDKDFFSKSDPFLEIFRMNDDATQQLVHRTEVVMNNLSPAWKSFKVSVNSLCSGDPDRRLKCIVWDWDSNGKHDFIGEFTSTFKEMRGAMEGKQVQWECINPKYKAKKKNYKNSGMVILNQCKIHKMHSFLDYIMGGCQIQFTVAIDFTASNGDPRNSCSLHYIHPYQPNEYLKALVAVGEICQDYDSDKMFPAFGFGARIPPEYTVSHDFAINFNEDNPECAGIQGVVEAYQSCLPKLQLYGPTNIAPIIQKVAKSASEETNTKEASQYFILLILTDGVITDMADTREAIVHASHLPMSVIIVGVGNADFSDMQMLDGDDGILRSPKGEPVLRDIVQFVPFRNFKHASPAALAKSVLAEVPNQVVDYYNGKGIKPKCSSEVYESSRTLAP.

C2 domains lie at 3–131 (KMSN…SKSL) and 137–264 (TAGK…VQWE). The Ca(2+) site is built by aspartate 170, aspartate 176, aspartate 232, aspartate 234, and aspartate 240. Positions 305-507 (QIQFTVAIDF…VLRDIVQFVP (203 aa)) constitute a VWFA domain.

Belongs to the copine family. In terms of assembly, interacts (via VWFA domain) with ACTB, BCOR, BICD2, CCDC22, CDC42BPB, CEP162, MYCBP2, NONO, PDCD6, PITPNM2, RDX, SKIL, SKT, SPTBN1, UBE2O and WTAP. Requires Ca(2+) as cofactor.

In terms of biological role, probable calcium-dependent phospholipid-binding protein that may play a role in calcium-mediated intracellular processes. This chain is Copine-4, found in Mus musculus (Mouse).